The sequence spans 449 residues: Probable protoheme IX farnesyltransferase, mitochondrial (449 aa).

Positions 99 to 138 are enriched in low complexity; the sequence is TTSTTTTTNINENNIKNENNNENNNENSNNNNEQSIKSNQ. The disordered stretch occupies residues 99–140; sequence TTSTTTTTNINENNIKNENNNENNNENSNNNNEQSIKSNQTK. Helical transmembrane passes span 163-183, 245-267, 279-299, 303-323, 352-372, 374-394, and 402-422; these read LTAIAGYVAACPIGAFDWVVL, MAVTPSLFVPGTLAACNVILYCW, TWIGAFVGAIPPLIGSVAATG, AIGMLLATFMYIWQIPHFLAL, SLAHALFGIPLPFIFDYFFNF, VHPITLTCMALSSASLALPFI, and LYIISLISLPITLFLSCLLRQ.

It belongs to the UbiA prenyltransferase family.

The protein localises to the mitochondrion membrane. In terms of biological role, converts protoheme IX and farnesyl diphosphate to heme O. The chain is Probable protoheme IX farnesyltransferase, mitochondrial (cox10) from Dictyostelium discoideum (Social amoeba).